The chain runs to 205 residues: GTP-binding protein rho3 (205 aa).

20 to 27 (GDGAAGKT) is a binding site for GTP. The short motif at 42-50 (YEPTIFENY) is the Effector region element. GTP is bound by residues 67–71 (DTAGQ) and 125–128 (LKCD). C202 bears the Cysteine methyl ester mark. A lipid anchor (S-geranylgeranyl cysteine) is attached at C202. Residues 203–205 (IIA) constitute a propeptide, removed in mature form.

This sequence belongs to the small GTPase superfamily. Rho family. As to quaternary structure, interacts with for3. In terms of processing, palmitoylated by the erf2-erf4 complex.

It localises to the cell membrane. Involved in controlling cell shape and septation. Regulates cell separation by modulating the function of the exocyst complex. Involved in post-Golgi vesicle transport. Involved in driving sexual development in a palmitoylation-dependent manner. The protein is GTP-binding protein rho3 (rho3) of Schizosaccharomyces pombe (strain 972 / ATCC 24843) (Fission yeast).